The following is a 76-amino-acid chain: MARFFRRRKFCRFTAEGVKEIDYKDLNTLKAYISETGKIVPSRITGTKARYQRQLATAIKRARYLALLPYTDSHGR.

The protein belongs to the bacterial ribosomal protein bS18 family. In terms of assembly, part of the 30S ribosomal subunit. Forms a tight heterodimer with protein bS6.

Its function is as follows. Binds as a heterodimer with protein bS6 to the central domain of the 16S rRNA, where it helps stabilize the platform of the 30S subunit. The sequence is that of Small ribosomal subunit protein bS18 from Stutzerimonas stutzeri (strain A1501) (Pseudomonas stutzeri).